The chain runs to 329 residues: Putative L-ascorbate peroxidase 6 (329 aa).

The active-site Proton acceptor is the H123. H244 provides a ligand contact to heme b.

Belongs to the peroxidase family. Ascorbate peroxidase subfamily. Heme b serves as cofactor.

It carries out the reaction L-ascorbate + H2O2 = L-dehydroascorbate + 2 H2O. Its function is as follows. Plays a key role in hydrogen peroxide removal. This chain is Putative L-ascorbate peroxidase 6 (APX6), found in Arabidopsis thaliana (Mouse-ear cress).